We begin with the raw amino-acid sequence, 335 residues long: Tetraacyldisaccharide 4'-kinase (335 aa).

Residue threonine 58–threonine 65 coordinates ATP.

The protein belongs to the LpxK family.

The catalysed reaction is a lipid A disaccharide + ATP = a lipid IVA + ADP + H(+). It participates in glycolipid biosynthesis; lipid IV(A) biosynthesis; lipid IV(A) from (3R)-3-hydroxytetradecanoyl-[acyl-carrier-protein] and UDP-N-acetyl-alpha-D-glucosamine: step 6/6. Transfers the gamma-phosphate of ATP to the 4'-position of a tetraacyldisaccharide 1-phosphate intermediate (termed DS-1-P) to form tetraacyldisaccharide 1,4'-bis-phosphate (lipid IVA). The chain is Tetraacyldisaccharide 4'-kinase from Shewanella frigidimarina (strain NCIMB 400).